A 156-amino-acid chain; its full sequence is Histidine-containing phosphotransfer protein 2 (156 aa).

Methionine 1 bears the N-acetylmethionine mark. The region spanning serine 40–glycine 147 is the HPt domain. Histidine 82 is subject to Phosphohistidine.

As to quaternary structure, interacts with the B-type response regulators ARR1, ARR2 and ARR10. Binds to AHK1, AHK2, AHK3, AHK4, AHK5, ETR1 and CKI1. In terms of processing, two-component system major event consists of a His-to-Asp phosphorelay between a sensor histidine kinase (HK) and a response regulator (RR). In plants, the His-to-Asp phosphorelay involves an additional intermediate named Histidine-containing phosphotransfer protein (HPt). This multistep phosphorelay consists of a His-Asp-His-Asp sequential transfer of a phosphate group between first a His and an Asp of the HK protein, followed by the transfer to a conserved His of the HPt protein and finally the transfer to an Asp in the receiver domain of the RR protein. As to expression, strongly expressed in flowers and roots. Detected also in leaves, siliques and stems.

Its subcellular location is the cytoplasm. It localises to the cytosol. The protein resides in the nucleus. Functionally, functions as a two-component phosphorelay mediators between cytokinin sensor histidine kinases and response regulator (B-type ARRs). Plays an important role in propagating cytokinin signal transduction through the multistep His-to-Asp phosphorelay. The protein is Histidine-containing phosphotransfer protein 2 (AHP2) of Arabidopsis thaliana (Mouse-ear cress).